The sequence spans 702 residues: Ribosomal RNA large subunit methyltransferase K/L (702 aa).

Residues 43–154 (LVYQSLMWSR…KETASIALDL (112 aa)) form the THUMP domain.

This sequence belongs to the methyltransferase superfamily. RlmKL family.

It localises to the cytoplasm. It carries out the reaction guanosine(2445) in 23S rRNA + S-adenosyl-L-methionine = N(2)-methylguanosine(2445) in 23S rRNA + S-adenosyl-L-homocysteine + H(+). The enzyme catalyses guanosine(2069) in 23S rRNA + S-adenosyl-L-methionine = N(2)-methylguanosine(2069) in 23S rRNA + S-adenosyl-L-homocysteine + H(+). Specifically methylates the guanine in position 2445 (m2G2445) and the guanine in position 2069 (m7G2069) of 23S rRNA. The chain is Ribosomal RNA large subunit methyltransferase K/L from Shigella boydii serotype 4 (strain Sb227).